The following is a 572-amino-acid chain: Mitochondrial distribution and morphology protein 34 (572 aa).

The SMP-LTD domain occupies 1-195; the sequence is MAFNFNWSPL…LPAIIHRLSL (195 aa). Disordered regions lie at residues 212–236, 321–426, 477–522, and 553–572; these read TASANGEGPGQDPLASPPQDPVDAL, VGSM…PDND, SATP…DNPT, and CGPFWDRHSQEESPPPAYGH. The span at 330 to 348 shows a compositional bias: low complexity; that stretch reads SASMVSSQSRSSTPSHTFS. Positions 358-370 are enriched in basic residues; it reads RHSKAHARKRKKR. Positions 371–381 are enriched in basic and acidic residues; that stretch reads VVDLRRPKTTD. 2 stretches are compositionally biased toward polar residues: residues 387–400 and 500–511; these read SDESSFTESTSAPS and DSSAGSSRQLPS.

This sequence belongs to the MDM34 family. As to quaternary structure, component of the ER-mitochondria encounter structure (ERMES) or MDM complex, composed of mmm1, mdm10, mdm12 and mdm34.

The protein resides in the mitochondrion outer membrane. Component of the ERMES/MDM complex, which serves as a molecular tether to connect the endoplasmic reticulum (ER) and mitochondria. Components of this complex are involved in the control of mitochondrial shape and protein biogenesis, and function in nonvesicular lipid trafficking between the ER and mitochondria. Mdm34 is required for the interaction of the ER-resident membrane protein mmm1 and the outer mitochondrial membrane-resident beta-barrel protein mdm10. The protein is Mitochondrial distribution and morphology protein 34 of Aspergillus fumigatus (strain CBS 144.89 / FGSC A1163 / CEA10) (Neosartorya fumigata).